The primary structure comprises 520 residues: MNTADDNAKQRLQELIGPDYTLQWIVGHGGMSTVWLADDNVNDREVAVKVLRPEFSDNTEFLSRFRNEARAAENIHSEHVVTTYDYREVADPAGHTFCFIVLEYIRGESLADMLEREGALPEELALDVMEQAAHGLSVIHRMGLVHRDIKPGNMLITANGILKITDFGIAKAAASVPLTRTGMVVGTAQYVSPEQAQGHQVTPASDVYSLGVVGYEMLSGRRPFTGDSSVSVAIAHINEAPPQMPTSVSAQARELIGIALRKDPARRFADGNELARAVSAVRLGNRPPQPHSPAVQATAVAPSPSASTAMLGQVARPTTSVPASPTVLPERQEKRGSGVGLGLLIAAVIAAVIGGIIWAGATGVFSGDSEETTTPETITQTVTPTETTTSEEPTLAPPPVQPTRQPVPTPDETPTRLPTTTQESPTRVSPTPEETDEPGEQTTPGGQPPLSTLPTSLGWQNNQGGTGNQGNPNTTGNPANPGTPGTTGGNGTGNAGGNSPDAADELLMSLDELMNVGGNQ.

The region spanning 20–281 is the Protein kinase domain; sequence YTLQWIVGHG…NELARAVSAV (262 aa). Residues 26-34 and K49 contribute to the ATP site; that span reads VGHGGMSTV. D148 functions as the Proton acceptor in the catalytic mechanism. Disordered regions lie at residues 315–334 and 366–504; these read ARPT…RQEK and SGDS…DAAD. Residues 374 to 394 are compositionally biased toward low complexity; that stretch reads TPETITQTVTPTETTTSEEPT. Residues 395–411 show a composition bias toward pro residues; the sequence is LAPPPVQPTRQPVPTPD. Over residues 416 to 429 the composition is skewed to polar residues; sequence RLPTTTQESPTRVS. The span at 440–449 shows a compositional bias: low complexity; it reads EQTTPGGQPP. A compositionally biased stretch (polar residues) spans 450–460; that stretch reads LSTLPTSLGWQ. Over residues 469–484 the composition is skewed to low complexity; sequence QGNPNTTGNPANPGTP. Residues 485–496 show a composition bias toward gly residues; that stretch reads GTTGGNGTGNAG.

It belongs to the protein kinase superfamily. Ser/Thr protein kinase family.

It carries out the reaction L-seryl-[protein] + ATP = O-phospho-L-seryl-[protein] + ADP + H(+). It catalyses the reaction L-threonyl-[protein] + ATP = O-phospho-L-threonyl-[protein] + ADP + H(+). This is Serine/threonine-protein kinases drp72 from Corynebacterium efficiens (strain DSM 44549 / YS-314 / AJ 12310 / JCM 11189 / NBRC 100395).